A 252-amino-acid polypeptide reads, in one-letter code: 5'-nucleotidase SurE (252 aa).

Residues Asp8, Asp9, Ser39, and Asn91 each coordinate a divalent metal cation.

The protein belongs to the SurE nucleotidase family. The cofactor is a divalent metal cation.

It localises to the cytoplasm. The enzyme catalyses a ribonucleoside 5'-phosphate + H2O = a ribonucleoside + phosphate. Functionally, nucleotidase that shows phosphatase activity on nucleoside 5'-monophosphates. In Variovorax paradoxus (strain S110), this protein is 5'-nucleotidase SurE.